The sequence spans 1088 residues: DNA mismatch repair protein MutS (1088 aa).

The disordered stretch occupies residues 498–579 (PLDGITPPDD…SFEMPSLHGH (82 aa)). Positions 537–546 (DLFDEEEEQE) are enriched in acidic residues. ATP is bound at residue 816–823 (GPNMSGKS). Residues 1000-1048 (LERRAPRSTPQPAPERTEERPAAGRPTARSHSAARGDPPRAPDGQLSLF) form a disordered region.

It belongs to the DNA mismatch repair MutS family.

In terms of biological role, this protein is involved in the repair of mismatches in DNA. It is possible that it carries out the mismatch recognition step. This protein has a weak ATPase activity. This is DNA mismatch repair protein MutS from Roseiflexus castenholzii (strain DSM 13941 / HLO8).